Here is a 431-residue protein sequence, read N- to C-terminus: Phosphoribosylamine--glycine ligase (431 aa).

The ATP-grasp domain maps to 108 to 315; sequence KDFLARHEIP…LVLLVEAAFA (208 aa). Residue 134–195 participates in ATP binding; that stretch reads LQEKGAPIVI…EEFLDGEEAS (62 aa). Mg(2+) contacts are provided by E285 and N287.

The protein belongs to the GARS family. The cofactor is Mg(2+). It depends on Mn(2+) as a cofactor.

The catalysed reaction is 5-phospho-beta-D-ribosylamine + glycine + ATP = N(1)-(5-phospho-beta-D-ribosyl)glycinamide + ADP + phosphate + H(+). It functions in the pathway purine metabolism; IMP biosynthesis via de novo pathway; N(1)-(5-phospho-D-ribosyl)glycinamide from 5-phospho-alpha-D-ribose 1-diphosphate: step 2/2. The polypeptide is Phosphoribosylamine--glycine ligase (Pseudomonas putida (strain ATCC 47054 / DSM 6125 / CFBP 8728 / NCIMB 11950 / KT2440)).